A 132-amino-acid polypeptide reads, in one-letter code: L-ectoine synthase (132 aa).

This sequence belongs to the ectoine synthase family.

The catalysed reaction is (2S)-4-acetamido-2-aminobutanoate = L-ectoine + H2O. It participates in amine and polyamine biosynthesis; ectoine biosynthesis; L-ectoine from L-aspartate 4-semialdehyde: step 3/3. Functionally, catalyzes the circularization of gamma-N-acetyl-alpha,gamma-diaminobutyric acid (ADABA) to ectoine (1,4,5,6-tetrahydro-2-methyl-4-pyrimidine carboxylic acid), which is an excellent osmoprotectant. The polypeptide is L-ectoine synthase (Alkalilimnicola ehrlichii (strain ATCC BAA-1101 / DSM 17681 / MLHE-1)).